Here is a 420-residue protein sequence, read N- to C-terminus: Odorant receptor 63a (420 aa).

Over 1-43 (MYSPEEAAELKRRNYRSIREMIRLSYTVGFNLLDPSRCGQVLR) the chain is Cytoplasmic. A helical transmembrane segment spans residues 44–64 (IWTIVLSVSSLASLYGHWQML). Topologically, residues 65 to 76 (ARYIHDIPRIGE) are extracellular. Residues 77–97 (TAGTALQFLTSIAKMWYFLFA) traverse the membrane as a helical segment. Over 98–150 (HRQIYELLRKARCHELLQKCELFERMSDLPVIKEIRQQVESTMNRYWASTRRQ) the chain is Cytoplasmic. The chain crosses the membrane as a helical span at residues 151-171 (ILIYLYSCICITTNYFINSFV). At 172-217 (INLYRYFTKPKGSYDIMLPLPSLYPAWEHKGLEFPYYHIQMYLETC) the chain is on the extracellular side. Residues 218 to 238 (SLYICGMCAVSFDGVFIVLCL) form a helical membrane-spanning segment. Residues 239–296 (HSVGLMRSLNQMVEQATSELVPPDRRVEYLRCCIYQYQRVANFATEVNNCFRHITFTQ) lie on the Cytoplasmic side of the membrane. Residues 297–317 (FLLSLFNWGLALFQMSVGLGN) traverse the membrane as a helical segment. Residue N318 is glycosylated (N-linked (GlcNAc...) asparagine). At 318 to 320 (NSS) the chain is on the extracellular side. A helical membrane pass occupies residues 321–341 (ITMIRMTMYLVAAGYQIVVYC). Residues 342–387 (YNGQRFATASEEIANAFYQVRWYGESREFRHLIRMMLMRTNRGFRL) lie on the Cytoplasmic side of the membrane. Residues 388 to 408 (DVSWFMQMSLPTLMAMVRTSG) traverse the membrane as a helical segment. Topologically, residues 409 to 420 (QYFLLLQNVNQK) are extracellular.

It belongs to the insect chemoreceptor superfamily. Heteromeric odorant receptor channel (TC 1.A.69) family. Or63a subfamily. In terms of assembly, interacts with Orco. Complexes exist early in the endomembrane system in olfactory sensory neurons (OSNs), coupling these complexes to the conserved ciliary trafficking pathway.

Its subcellular location is the cell membrane. Odorant receptor which mediates acceptance or avoidance behavior, depending on its substrates. The odorant receptor repertoire encodes a large collection of odor stimuli that vary widely in identity, intensity, and duration. May form a complex with Orco to form odorant-sensing units, providing sensitive and prolonged odorant signaling and calcium permeability. Involved in the behavioral responses to butyl acetate, isoamyl acetate, and hexanoic acid. This chain is Odorant receptor 63a (Or63a), found in Drosophila melanogaster (Fruit fly).